The sequence spans 326 residues: Fos-related antigen 2 (326 aa).

The residue at position 1 (Met-1) is an N-acetylmethionine. The segment at 1 to 39 (MYQDYPGNFDTSSRGSSGSPAHAESYSSGGGGQQKFRVD) is disordered. Residues 9 to 19 (FDTSSRGSSGS) are compositionally biased toward polar residues. A Glycyl lysine isopeptide (Lys-Gly) (interchain with G-Cter in SUMO2) cross-link involves residue Lys-35. Lys-104 is subject to N6-acetyllysine; alternate. Lys-104 participates in a covalent cross-link: Glycyl lysine isopeptide (Lys-Gly) (interchain with G-Cter in SUMO2); alternate. Disordered regions lie at residues 111-131 (GRRRRDEQLSPEEEEKRRIRR), 193-244 (ISPE…QRSV), and 289-326 (EQESPASPSESCSKAHRRSSSSGDQSSDSLNSPTLLAL). Residue Ser-120 is modified to Phosphoserine. The bZIP domain occupies 124 to 187 (EEKRRIRRER…EKLEFMLVAH (64 aa)). A basic motif region spans residues 126-128 (KRR). Positions 129–136 (IRRERNKL) are leucine-zipper. Ser-200 carries the post-translational modification Phosphoserine. Polar residues predominate over residues 201–211 (PPTSGLQSLRG). Lys-222 is covalently cross-linked (Glycyl lysine isopeptide (Lys-Gly) (interchain with G-Cter in SUMO2); alternate). A Glycyl lysine isopeptide (Lys-Gly) (interchain with G-Cter in SUMO1); alternate cross-link involves residue Lys-222. The residue at position 230 (Ser-230) is a Phosphoserine. Residue Lys-239 forms a Glycyl lysine isopeptide (Lys-Gly) (interchain with G-Cter in SUMO2) linkage. A phosphoserine mark is found at Ser-308 and Ser-320. The segment covering 308 to 320 (SSSGDQSSDSLNS) has biased composition (low complexity).

It belongs to the bZIP family. Fos subfamily. As to quaternary structure, heterodimer. Interacts with the BAF multiprotein chromatin-remodeling complex subunits SMARCB1 and SMARCD1. Interacts with ARID1A and JUN. Expressed in the brain cortex. Expressed at night in pineal gland (at protein level). Also expressed in osteoblasts (at protein level).

Its subcellular location is the nucleus. Its function is as follows. Controls osteoclast survival and size. As a dimer with JUN, activates LIF transcription. Activates CEBPB transcription in PGE2-activated osteoblasts. The sequence is that of Fos-related antigen 2 (Fosl2) from Rattus norvegicus (Rat).